Reading from the N-terminus, the 366-residue chain is 3-dehydroquinate synthase (366 aa).

NAD(+) contacts are provided by residues 74–79, 108–112, 132–133, K144, K153, and 171–174; these read SGEAAK, GVVGD, TT, and FLRT. Zn(2+) contacts are provided by E186, H249, and H266.

The protein belongs to the sugar phosphate cyclases superfamily. Dehydroquinate synthase family. The cofactor is Co(2+). It depends on Zn(2+) as a cofactor. NAD(+) is required as a cofactor.

The protein resides in the cytoplasm. The catalysed reaction is 7-phospho-2-dehydro-3-deoxy-D-arabino-heptonate = 3-dehydroquinate + phosphate. The protein operates within metabolic intermediate biosynthesis; chorismate biosynthesis; chorismate from D-erythrose 4-phosphate and phosphoenolpyruvate: step 2/7. Catalyzes the conversion of 3-deoxy-D-arabino-heptulosonate 7-phosphate (DAHP) to dehydroquinate (DHQ). In Geobacillus kaustophilus (strain HTA426), this protein is 3-dehydroquinate synthase.